Here is a 226-residue protein sequence, read N- to C-terminus: 7-cyano-7-deazaguanine synthase (226 aa).

8 to 18 (ISGGLDSTTCL) lines the ATP pocket. 4 residues coordinate Zn(2+): Cys188, Cys198, Cys201, and Cys204.

Belongs to the QueC family. It depends on Zn(2+) as a cofactor.

It carries out the reaction 7-carboxy-7-deazaguanine + NH4(+) + ATP = 7-cyano-7-deazaguanine + ADP + phosphate + H2O + H(+). It participates in purine metabolism; 7-cyano-7-deazaguanine biosynthesis. Catalyzes the ATP-dependent conversion of 7-carboxy-7-deazaguanine (CDG) to 7-cyano-7-deazaguanine (preQ(0)). This is 7-cyano-7-deazaguanine synthase from Coxiella burnetii (strain RSA 331 / Henzerling II).